An 89-amino-acid chain; its full sequence is Acylphosphatase (89 aa).

In terms of domain architecture, Acylphosphatase-like spans 3–89 (QKHLQVFGTV…SEDFSDFKSI (87 aa)). Residues arginine 18 and asparagine 36 contribute to the active site.

Belongs to the acylphosphatase family.

It catalyses the reaction an acyl phosphate + H2O = a carboxylate + phosphate + H(+). This is Acylphosphatase (acyP) from Staphylococcus haemolyticus (strain JCSC1435).